Reading from the N-terminus, the 231-residue chain is Nuclear transcription factor Y subunit C-9 (231 aa).

The interval 211–231 (NPYMGQPMWQQQAPDQPDQEN) is disordered.

It belongs to the NFYC/HAP5 subunit family. Heterotrimeric transcription factor composed of three components, NF-YA, NF-YB and NF-YC. Interacts with NFYA2, NFYB2, CO and RGA. Interacts with REF6 (via N-terminus). Ubiquitous. Present in etiolated seedlings.

The protein localises to the nucleus. In terms of biological role, stimulates the transcription of various genes by recognizing and binding to a CCAAT motif in promoters. Interacts with REF6 to directly regulate SOC1 transcription in response to flowering signals from photoperiod and gibberellic acid pathways. This is Nuclear transcription factor Y subunit C-9 (NFYC9) from Arabidopsis thaliana (Mouse-ear cress).